The chain runs to 438 residues: Glutamate-1-semialdehyde 2,1-aminomutase (438 aa).

At Lys-274 the chain carries N6-(pyridoxal phosphate)lysine.

Belongs to the class-III pyridoxal-phosphate-dependent aminotransferase family. HemL subfamily. As to quaternary structure, homodimer. It depends on pyridoxal 5'-phosphate as a cofactor.

The protein localises to the cytoplasm. It carries out the reaction (S)-4-amino-5-oxopentanoate = 5-aminolevulinate. Its pathway is porphyrin-containing compound metabolism; protoporphyrin-IX biosynthesis; 5-aminolevulinate from L-glutamyl-tRNA(Glu): step 2/2. The polypeptide is Glutamate-1-semialdehyde 2,1-aminomutase (Salinibacter ruber (strain DSM 13855 / M31)).